A 238-amino-acid chain; its full sequence is Splicing regulator RBM11 (238 aa).

The 78-residue stretch at Arg10–Gly87 folds into the RRM domain. The tract at residues Ala172 to Tyr238 is disordered. The Bipartite nuclear localization signal motif lies at Asn202 to Arg237. Over residues Lys228 to Tyr238 the composition is skewed to basic residues.

As to quaternary structure, homodimer. Selectively expressed in brain, cerebellum and testis, and to a lower extent in kidney.

The protein resides in the nucleus. Its subcellular location is the nucleoplasm. It is found in the nucleus speckle. Tissue-specific splicing factor with potential implication in the regulation of alternative splicing during neuron and germ cell differentiation. Antagonizes SRSF1-mediated BCL-X splicing. May affect the choice of alternative 5' splice sites by binding to specific sequences in exons and antagonizing the SR protein SRSF1. This chain is Splicing regulator RBM11 (Rbm11), found in Mus musculus (Mouse).